Reading from the N-terminus, the 434-residue chain is Oxysterol-binding protein homolog 5 (434 aa).

The interval 18–371 is OSBP-related domain (ORD); the sequence is SSFNGDLSSL…KQVDYMNENT (354 aa). A 1,2-diacyl-sn-glycero-3-phospho-(1D-myo-inositol 4-phosphate) is bound at residue 24 to 29; the sequence is LSSLSA. Gln96 lines the 20-hydroxycholesterol pocket. Gln96 serves as a coordination point for 25-hydroxycholesterol. Residues Gln96 and Arg100 each coordinate 7beta-hydroxycholesterol. Gln96 contributes to the cholesterol binding site. Gln96 provides a ligand contact to ergosterol. Residues 109–112, 143–144, Lys335, Glu339, and Arg343 contribute to the a 1,2-diacyl-sn-glycero-3-phospho-(1D-myo-inositol 4-phosphate) site; these read KPLN and HH. Ser389 carries the phosphoserine modification.

It belongs to the OSBP family.

The protein localises to the vacuole membrane. It is found in the bud neck. Functionally, lipid transport protein (LTP) involved in non-vesicular transfer of lipids between membranes. Functions in phosphoinositide-coupled directional transport of various lipids by carrying the lipid molecule in a hydrophobic pocket and transferring it between membranes through the cytosol. Involved in maintenance of intracellular sterol distribution and homeostasis. Plays a role in ergosterol synthesis. Binds and transports sterol. May be involved in ergosterol transport from the plasma membrane (PM) to the ER. The protein is Oxysterol-binding protein homolog 5 of Saccharomyces cerevisiae (strain ATCC 204508 / S288c) (Baker's yeast).